A 329-amino-acid polypeptide reads, in one-letter code: G-protein coupled bile acid receptor 1 (329 aa).

Residues 1-15 (MMTPNSTELSAIPMG) lie on the Extracellular side of the membrane. N-linked (GlcNAc...) asparagine glycosylation occurs at N5. Residues 16–36 (VLGLSLALASLIVIANLLLAL) traverse the membrane as a helical segment. At 37–49 (GIALDRHLRSPPA) the chain is on the cytoplasmic side. Residues 50–70 (GCFFLSLLLAGLLTGLALPML) form a helical membrane-spanning segment. Topologically, residues 71–84 (PGLWSRNHQGYWSC) are extracellular. C84 and C154 are disulfide-bonded. Residues 85–105 (LLLHLTPNFCFLSLLANLLLV) form a helical membrane-spanning segment. Residues 106–124 (HGERYMAVLQPLRPHGSVR) lie on the Cytoplasmic side of the membrane. Residues 125-145 (LALFLTWVSSLFFASLPALGW) form a helical membrane-spanning segment. Residues 146 to 164 (NHWSPDANCSSQAVFPAPY) lie on the Extracellular side of the membrane. A glycan (N-linked (GlcNAc...) asparagine) is linked at N153. A helical membrane pass occupies residues 165–185 (LYLEVYGLLLPAVGATALLSV). Over 186–229 (RVLATAHRQLCEIRRLERAVCRDVPSTLARALTWRQARAQAGAT) the chain is Cytoplasmic. A helical transmembrane segment spans residues 230–250 (LLFLLCWGPYVATLLLSVLAY). Over 251–260 (ERRPPLGPGT) the chain is Extracellular. Residues 261 to 281 (LLSLISLGSTSAAAVPVAMGL) traverse the membrane as a helical segment. Over 282 to 329 (GDQRYTAPWRTAAQRCLRVLRGRAKRDNPGPSTAYHTSSQCSIDLDLN) the chain is Cytoplasmic.

This sequence belongs to the G-protein coupled receptor 1 family.

Its subcellular location is the cell membrane. Functionally, receptor for bile acid. Bile acid-binding induces its internalization, activation of extracellular signal-regulated kinase and intracellular cAMP production. May be involved in the suppression of macrophage functions by bile acids. Involved in bile acid promoted GLP1R secretion. The chain is G-protein coupled bile acid receptor 1 (Gpbar1) from Mus musculus (Mouse).